We begin with the raw amino-acid sequence, 346 residues long: UPF0053 protein sll1254 (346 aa).

The next 4 helical transmembrane spans lie at 1–21 (MLEI…CSCA), 58–78 (IGTI…TIGA), 87–107 (AWMG…GEII), and 121–141 (LLIA…VWLI). Residues 1-179 (MLEIVAAIFI…YKEGVIEGDE (179 aa)) form the CNNM transmembrane domain. CBS domains are found at residues 198 to 259 (MTPR…GYKT) and 263 to 320 (LARP…IVDE).

This sequence belongs to the UPF0053 family.

Its subcellular location is the cell membrane. The protein is UPF0053 protein sll1254 of Synechocystis sp. (strain ATCC 27184 / PCC 6803 / Kazusa).